Consider the following 335-residue polypeptide: Coiled-coil domain-containing protein 68 (335 aa).

The stretch at 101 to 305 forms a coiled coil; the sequence is QLLEMNKENE…KTQVALSSET (205 aa).

Interacts with CEP170. As to expression, expressed in bone marrow, colon, small intestine, spleen, testis, trachea and cutaneous T-cell lymphoma (CTCL).

It localises to the cytoplasm. Its subcellular location is the cytoskeleton. It is found in the microtubule organizing center. The protein localises to the centrosome. The protein resides in the centriole. Its function is as follows. Centriolar protein required for centriole subdistal appendage assembly and microtubule anchoring in interphase cells. Together with CCDC120, cooperate with subdistal appendage components ODF2, NIN and CEP170 for hierarchical subdistal appendage assembly. This is Coiled-coil domain-containing protein 68 (CCDC68) from Homo sapiens (Human).